The primary structure comprises 291 residues: 4-hydroxy-tetrahydrodipicolinate synthase (291 aa).

Threonine 45 provides a ligand contact to pyruvate. The Proton donor/acceptor role is filled by tyrosine 133. Lysine 161 serves as the catalytic Schiff-base intermediate with substrate. Isoleucine 203 serves as a coordination point for pyruvate.

It belongs to the DapA family. Homotetramer; dimer of dimers.

The protein localises to the cytoplasm. It carries out the reaction L-aspartate 4-semialdehyde + pyruvate = (2S,4S)-4-hydroxy-2,3,4,5-tetrahydrodipicolinate + H2O + H(+). It participates in amino-acid biosynthesis; L-lysine biosynthesis via DAP pathway; (S)-tetrahydrodipicolinate from L-aspartate: step 3/4. In terms of biological role, catalyzes the condensation of (S)-aspartate-beta-semialdehyde [(S)-ASA] and pyruvate to 4-hydroxy-tetrahydrodipicolinate (HTPA). In Neisseria meningitidis serogroup C / serotype 2a (strain ATCC 700532 / DSM 15464 / FAM18), this protein is 4-hydroxy-tetrahydrodipicolinate synthase.